Here is a 258-residue protein sequence, read N- to C-terminus: Imidazole glycerol phosphate synthase subunit HisF (258 aa).

Residues D11 and D130 contribute to the active site.

Belongs to the HisA/HisF family. Heterodimer of HisH and HisF.

It is found in the cytoplasm. The enzyme catalyses 5-[(5-phospho-1-deoxy-D-ribulos-1-ylimino)methylamino]-1-(5-phospho-beta-D-ribosyl)imidazole-4-carboxamide + L-glutamine = D-erythro-1-(imidazol-4-yl)glycerol 3-phosphate + 5-amino-1-(5-phospho-beta-D-ribosyl)imidazole-4-carboxamide + L-glutamate + H(+). It participates in amino-acid biosynthesis; L-histidine biosynthesis; L-histidine from 5-phospho-alpha-D-ribose 1-diphosphate: step 5/9. Functionally, IGPS catalyzes the conversion of PRFAR and glutamine to IGP, AICAR and glutamate. The HisF subunit catalyzes the cyclization activity that produces IGP and AICAR from PRFAR using the ammonia provided by the HisH subunit. The protein is Imidazole glycerol phosphate synthase subunit HisF of Xanthomonas euvesicatoria pv. vesicatoria (strain 85-10) (Xanthomonas campestris pv. vesicatoria).